The chain runs to 410 residues: S-adenosylmethionine synthase (410 aa).

His15 lines the ATP pocket. Asp17 provides a ligand contact to Mg(2+). Position 43 (Glu43) interacts with K(+). Positions 56 and 100 each coordinate L-methionine. Positions 100–110 (QSPDIAKGVDT) are flexible loop. ATP-binding positions include 171–173 (DGK), 248–249 (KF), Asp257, 263–264 (RK), Ala280, and Lys284. Asp257 contacts L-methionine. Position 288 (Lys288) interacts with L-methionine.

The protein belongs to the AdoMet synthase family. Homotetramer; dimer of dimers. Mg(2+) is required as a cofactor. K(+) serves as cofactor.

The protein resides in the cytoplasm. The catalysed reaction is L-methionine + ATP + H2O = S-adenosyl-L-methionine + phosphate + diphosphate. The protein operates within amino-acid biosynthesis; S-adenosyl-L-methionine biosynthesis; S-adenosyl-L-methionine from L-methionine: step 1/1. Functionally, catalyzes the formation of S-adenosylmethionine (AdoMet) from methionine and ATP. The overall synthetic reaction is composed of two sequential steps, AdoMet formation and the subsequent tripolyphosphate hydrolysis which occurs prior to release of AdoMet from the enzyme. The chain is S-adenosylmethionine synthase from Prochlorococcus marinus (strain MIT 9211).